We begin with the raw amino-acid sequence, 340 residues long: 4-amino-5-hydroxymethyl-2-methylpyrimidine phosphate synthase THI13 (340 aa).

Position 62 is an N6-(pyridoxal phosphate)lysine (K62). H66 is an active-site residue. Pyridoxal 5'-phosphate is bound at residue 115–118 (GEFG). The CCCFC; essential for catalytic activity, may be the site of iron coordination signature appears at 195 to 199 (CCCFC).

This sequence belongs to the NMT1/THI5 family. Homodimer. It depends on Fe cation as a cofactor.

It catalyses the reaction N(6)-(pyridoxal phosphate)-L-lysyl-[4-amino-5-hydroxymethyl-2-methylpyrimidine phosphate synthase] + L-histidyl-[4-amino-5-hydroxymethyl-2-methylpyrimidine phosphate synthase] + 2 Fe(3+) + 4 H2O = L-lysyl-[4-amino-5-hydroxymethyl-2-methylpyrimidine phosphate synthase] + (2S)-2-amino-5-hydroxy-4-oxopentanoyl-[4-amino-5-hydroxymethyl-2-methylpyrimidine phosphate synthase] + 4-amino-2-methyl-5-(phosphooxymethyl)pyrimidine + 3-oxopropanoate + 2 Fe(2+) + 2 H(+). Its pathway is cofactor biosynthesis; thiamine diphosphate biosynthesis. Responsible for the formation of the pyrimidine heterocycle in the thiamine biosynthesis pathway. Catalyzes the formation of hydroxymethylpyrimidine phosphate (HMP-P) from histidine and pyridoxal phosphate (PLP). The protein uses PLP and the active site histidine to form HMP-P, generating an inactive enzyme. The enzyme can only undergo a single turnover, which suggests it is a suicide enzyme. The chain is 4-amino-5-hydroxymethyl-2-methylpyrimidine phosphate synthase THI13 from Saccharomyces cerevisiae (strain ATCC 204508 / S288c) (Baker's yeast).